A 205-amino-acid polypeptide reads, in one-letter code: High frequency lysogenization protein HflD homolog (205 aa).

It belongs to the HflD family.

The protein resides in the cytoplasm. It localises to the cell inner membrane. This is High frequency lysogenization protein HflD homolog from Haemophilus influenzae (strain 86-028NP).